The primary structure comprises 473 residues: Siroheme synthase (473 aa).

Positions methionine 1–leucine 203 are precorrin-2 dehydrogenase /sirohydrochlorin ferrochelatase. NAD(+)-binding positions include glutamate 22 to valine 23 and lysine 43 to glutamate 44. A Phosphoserine modification is found at serine 128. The uroporphyrinogen-III C-methyltransferase stretch occupies residues glycine 215 to isoleucine 473. Proline 224 is an S-adenosyl-L-methionine binding site. Aspartate 247 acts as the Proton acceptor in catalysis. Lysine 269 (proton donor) is an active-site residue. Residues glycine 300 to aspartate 302, isoleucine 305, methionine 382, and glycine 411 each bind S-adenosyl-L-methionine.

In the N-terminal section; belongs to the precorrin-2 dehydrogenase / sirohydrochlorin ferrochelatase family. The protein in the C-terminal section; belongs to the precorrin methyltransferase family.

It carries out the reaction uroporphyrinogen III + 2 S-adenosyl-L-methionine = precorrin-2 + 2 S-adenosyl-L-homocysteine + H(+). The enzyme catalyses precorrin-2 + NAD(+) = sirohydrochlorin + NADH + 2 H(+). It catalyses the reaction siroheme + 2 H(+) = sirohydrochlorin + Fe(2+). It functions in the pathway cofactor biosynthesis; adenosylcobalamin biosynthesis; precorrin-2 from uroporphyrinogen III: step 1/1. Its pathway is cofactor biosynthesis; adenosylcobalamin biosynthesis; sirohydrochlorin from precorrin-2: step 1/1. The protein operates within porphyrin-containing compound metabolism; siroheme biosynthesis; precorrin-2 from uroporphyrinogen III: step 1/1. It participates in porphyrin-containing compound metabolism; siroheme biosynthesis; siroheme from sirohydrochlorin: step 1/1. It functions in the pathway porphyrin-containing compound metabolism; siroheme biosynthesis; sirohydrochlorin from precorrin-2: step 1/1. In terms of biological role, multifunctional enzyme that catalyzes the SAM-dependent methylations of uroporphyrinogen III at position C-2 and C-7 to form precorrin-2 via precorrin-1. Then it catalyzes the NAD-dependent ring dehydrogenation of precorrin-2 to yield sirohydrochlorin. Finally, it catalyzes the ferrochelation of sirohydrochlorin to yield siroheme. This is Siroheme synthase from Buchnera aphidicola subsp. Acyrthosiphon pisum (strain APS) (Acyrthosiphon pisum symbiotic bacterium).